Here is a 159-residue protein sequence, read N- to C-terminus: Phosphopantetheine adenylyltransferase (159 aa).

Threonine 10 contributes to the substrate binding site. ATP contacts are provided by residues 10 to 11 (TF) and histidine 18. Residues lysine 42, methionine 74, and arginine 88 each coordinate substrate. Residues 89–91 (GLR), glutamate 99, and 124–130 (WSFISSS) contribute to the ATP site.

It belongs to the bacterial CoaD family. In terms of assembly, homohexamer. It depends on Mg(2+) as a cofactor.

The protein localises to the cytoplasm. The enzyme catalyses (R)-4'-phosphopantetheine + ATP + H(+) = 3'-dephospho-CoA + diphosphate. It participates in cofactor biosynthesis; coenzyme A biosynthesis; CoA from (R)-pantothenate: step 4/5. In terms of biological role, reversibly transfers an adenylyl group from ATP to 4'-phosphopantetheine, yielding dephospho-CoA (dPCoA) and pyrophosphate. This is Phosphopantetheine adenylyltransferase from Escherichia fergusonii (strain ATCC 35469 / DSM 13698 / CCUG 18766 / IAM 14443 / JCM 21226 / LMG 7866 / NBRC 102419 / NCTC 12128 / CDC 0568-73).